We begin with the raw amino-acid sequence, 148 residues long: Protein H2A.6 (148 aa).

The disordered stretch occupies residues 120–148 (GAAEKESTKSPKKKAATKSPKKKTAATKE). 2 short sequence motifs (SPKK motif) span residues 129-132 (SPKK) and 138-141 (SPKK). Basic residues predominate over residues 129-148 (SPKKKAATKSPKKKTAATKE).

This sequence belongs to the histone H2A family. As to quaternary structure, the nucleosome is a histone octamer containing two molecules each of H2A, H2B, H3 and H4 assembled in one H3-H4 heterotetramer and two H2A-H2B heterodimers. The octamer wraps approximately 147 bp of DNA. Abundant in meristematic tissues.

The protein localises to the nucleus. It localises to the chromosome. Functionally, core component of nucleosome. Nucleosomes wrap and compact DNA into chromatin, limiting DNA accessibility to the cellular machineries which require DNA as a template. Histones thereby play a central role in transcription regulation, DNA repair, DNA replication and chromosomal stability. DNA accessibility is regulated via a complex set of post-translational modifications of histones, also called histone code, and nucleosome remodeling. The protein is Protein H2A.6 (H2A-3) of Triticum aestivum (Wheat).